Reading from the N-terminus, the 149-residue chain is Large ribosomal subunit protein bL9 (149 aa).

This sequence belongs to the bacterial ribosomal protein bL9 family.

Functionally, binds to the 23S rRNA. The sequence is that of Large ribosomal subunit protein bL9 from Bacillus velezensis (strain DSM 23117 / BGSC 10A6 / LMG 26770 / FZB42) (Bacillus amyloliquefaciens subsp. plantarum).